We begin with the raw amino-acid sequence, 225 residues long: Octanoyltransferase (225 aa).

Residues 31 to 214 (ENTCDEVWLV…ELTTLLDYTD (184 aa)) form the BPL/LPL catalytic domain. Residues 70–77 (RGGQVTYH), 137–139 (SLG), and 150–152 (GLA) contribute to the substrate site. The active-site Acyl-thioester intermediate is the Cys-168.

This sequence belongs to the LipB family.

It is found in the cytoplasm. It carries out the reaction octanoyl-[ACP] + L-lysyl-[protein] = N(6)-octanoyl-L-lysyl-[protein] + holo-[ACP] + H(+). Its pathway is protein modification; protein lipoylation via endogenous pathway; protein N(6)-(lipoyl)lysine from octanoyl-[acyl-carrier-protein]: step 1/2. Its function is as follows. Catalyzes the transfer of endogenously produced octanoic acid from octanoyl-acyl-carrier-protein onto the lipoyl domains of lipoate-dependent enzymes. Lipoyl-ACP can also act as a substrate although octanoyl-ACP is likely to be the physiological substrate. The sequence is that of Octanoyltransferase from Aliivibrio fischeri (strain ATCC 700601 / ES114) (Vibrio fischeri).